We begin with the raw amino-acid sequence, 375 residues long: G-protein coupled estrogen receptor 1 (375 aa).

Met-1 is modified (N-acetylmethionine). At 1–62 (MDATTPAQTV…QQYVIALFLS (62 aa)) the chain is on the extracellular side. Residues Asn-32 and Asn-44 are each glycosylated (N-linked (GlcNAc...) asparagine). A helical transmembrane segment spans residues 63-84 (CLYTIFLFPIGFVGNILILVVN). Over 85–96 (ISFREKMTIPDL) the chain is Cytoplasmic. Residues 97-120 (YFINLAAADLILVADSLIEVFNLD) form a helical membrane-spanning segment. The Extracellular portion of the chain corresponds to 121-132 (EQYYDIAVLCTF). Cys-130 and Cys-207 are disulfide-bonded. The helical transmembrane segment at 133-153 (MSLFLQINMYSSVFFLTWMSF) threads the bilayer. The Cytoplasmic segment spans residues 154-175 (DRYLALAKAMRCGLFRTKHHAR). A helical membrane pass occupies residues 176-194 (LSCGLIWMASVSATLVPFT). Residues 195–220 (AVHLRHTEEACFCFADVREVQWLEVT) are Extracellular-facing. A helical membrane pass occupies residues 221–236 (LGFIMPFAIIGLCYSL). The Cytoplasmic portion of the chain corresponds to 237 to 259 (IVRALIRAHRHRGLRPRRQKALR). A helical transmembrane segment spans residues 260-280 (MIFAVVLVFFICWLPENVFIS). Topologically, residues 281–306 (VHLLQWTQPGDTPCKQSFRHAYPLTG) are extracellular. The chain crosses the membrane as a helical span at residues 307 to 327 (HIVNLAAFSNSCLNPLIYSFL). Residues 328-375 (GETFRDKLRLYVEQKTSLPALNRFCHATLKAVIPDSTEQSEVRFSSAV) lie on the Cytoplasmic side of the membrane.

The protein belongs to the G-protein coupled receptor 1 family. As to quaternary structure, interacts with RAMP3; the interaction confers proper subcellular localization and function in cardioprotection. Interacts with KRT7 and KRT8. Interacts with EGFR; the interaction increases after agonist-induced stimulation in cancer-associated fibroblasts (CAF). Interacts with EGFR and ESR1. Interacts (via C-terminus tail motif) with DLG4 (via N-terminus tandem pair of PDZ domains); the interaction is direct and induces the increase of GPER1 protein levels residing at the plasma membrane surface in a estradiol-independent manner. Homodimer. Heterodimer; heterodimerizes with other G-protein-coupled receptor (GPCRs) like CRHR1, HTR1A and PAQR8. In terms of processing, ubiquitinated; ubiquitination occurs at the plasma membrane and leads to proteasome-mediated degradation. Post-translationally, N-glycosylated. Expressed in brain, heart, spleen, preadipocytes, mature adipocytes and primary hippocampal neurons. Expressed in neurons of the hippocampus, hypothalamic paraventricular nucleus (PVH), supraoptic nucleus (SON) and the median eminence. Expressed in the nucleus ambiguous (at protein level). Expressed in brain, pituitary gland, adrenal medulla, renal pelvis, ovary, endothelial cells, visceral fat tissues and islets of Langerhans.

Its subcellular location is the nucleus. It is found in the cytoplasm. It localises to the perinuclear region. The protein resides in the cytoskeleton. The protein localises to the cell membrane. Its subcellular location is the endoplasmic reticulum membrane. It is found in the golgi apparatus membrane. It localises to the cell projection. The protein resides in the dendrite. The protein localises to the cytoplasmic vesicle membrane. Its subcellular location is the early endosome. It is found in the recycling endosome. It localises to the golgi apparatus. The protein resides in the trans-Golgi network. The protein localises to the dendritic spine membrane. Its subcellular location is the axon. It is found in the postsynaptic density. It localises to the mitochondrion membrane. Its function is as follows. G-protein coupled estrogen receptor that binds to 17-beta-estradiol (E2) with high affinity, leading to rapid and transient activation of numerous intracellular signaling pathways. Stimulates cAMP production, calcium mobilization and tyrosine kinase Src inducing the release of heparin-bound epidermal growth factor (HB-EGF) and subsequent transactivation of the epidermal growth factor receptor (EGFR), activating downstream signaling pathways such as PI3K/Akt and ERK/MAPK. Mediates pleiotropic functions among others in the cardiovascular, endocrine, reproductive, immune and central nervous systems. Has a role in cardioprotection by reducing cardiac hypertrophy and perivascular fibrosis in a RAMP3-dependent manner. Regulates arterial blood pressure by stimulating vasodilation and reducing vascular smooth muscle and microvascular endothelial cell proliferation. Plays a role in blood glucose homeostasis contributing to the insulin secretion response by pancreatic beta cells. Triggers mitochondrial apoptosis during pachytene spermatocyte differentiation. Stimulates uterine epithelial cell proliferation. Enhances uterine contractility in response to oxytocin. Contributes to thymic atrophy by inducing apoptosis. Attenuates TNF-mediated endothelial expression of leukocyte adhesion molecules. Promotes neuritogenesis in developing hippocampal neurons. Plays a role in acute neuroprotection against NMDA-induced excitotoxic neuronal death. Increases firing activity and intracellular calcium oscillations in luteinizing hormone-releasing hormone (LHRH) neurons. Inhibits early osteoblast proliferation at growth plate during skeletal development. Inhibits mature adipocyte differentiation and lipid accumulation. Involved in the recruitment of beta-arrestin 2 ARRB2 at the plasma membrane in epithelial cells. Also functions as a receptor for aldosterone mediating rapid regulation of vascular contractibility through the PI3K/ERK signaling pathway. Involved in cancer progression regulation. Stimulates cancer-associated fibroblast (CAF) proliferation by a rapid genomic response through the EGFR/ERK transduction pathway. Associated with EGFR, may act as a transcription factor activating growth regulatory genes (c-fos, cyclin D1). Promotes integrin alpha-5/beta-1 and fibronectin (FN) matrix assembly in breast cancer cells. This Mus musculus (Mouse) protein is G-protein coupled estrogen receptor 1 (Gper1).